An 81-amino-acid chain; its full sequence is RBAK downstream neighbor protein (81 aa).

Positions 1–22 (MWPPLLLLLLLLPAAPVPTAKA) are cleaved as a signal peptide.

Its subcellular location is the secreted. The chain is RBAK downstream neighbor protein (RBAKDN) from Homo sapiens (Human).